We begin with the raw amino-acid sequence, 413 residues long: Methylaspartate ammonia-lyase (413 aa).

(2S,3S)-3-methyl-L-aspartate is bound at residue glutamine 172. Mg(2+) is bound by residues aspartate 238, glutamate 273, and aspartate 307. Residue glutamine 329 coordinates (2S,3S)-3-methyl-L-aspartate. Lysine 331 (proton acceptor) is an active-site residue. (2S,3S)-3-methyl-L-aspartate is bound by residues 360 to 361 (TC) and cysteine 361.

Belongs to the methylaspartate ammonia-lyase family. Homodimer. It depends on Mg(2+) as a cofactor.

The catalysed reaction is (2S,3S)-3-methyl-L-aspartate = mesaconate + NH4(+). It participates in amino-acid degradation; L-glutamate degradation via mesaconate pathway; acetate and pyruvate from L-glutamate: step 2/4. Its activity is regulated as follows. Inhibited by calcium ions. Involved in the methylaspartate cycle. Catalyzes the formation of the alpha,beta-unsaturated bond by the reversible anti elimination of ammonia from L-threo-beta-methylaspartate (L-threo-(2S,3S)-3-methylaspartate) to give mesaconate. It can also use L-erythro-beta-methylaspartate (L-erythro-(2S,3R)-3-methylaspartate), L-aspartate, fumarate and ethylfumarate as substrates. This Clostridium tetanomorphum protein is Methylaspartate ammonia-lyase.